We begin with the raw amino-acid sequence, 267 residues long: 2-keto-3-deoxy-L-rhamnonate aldolase (267 aa).

His49 serves as the catalytic Proton acceptor. Gln151 provides a ligand contact to substrate. Glu153 provides a ligand contact to Mg(2+). Residues Ala178 and Asp179 each contribute to the substrate site. Position 179 (Asp179) interacts with Mg(2+).

The protein belongs to the HpcH/HpaI aldolase family. KDR aldolase subfamily. In terms of assembly, homohexamer. The cofactor is Mg(2+).

It catalyses the reaction 2-dehydro-3-deoxy-L-rhamnonate = (S)-lactaldehyde + pyruvate. In terms of biological role, catalyzes the reversible retro-aldol cleavage of 2-keto-3-deoxy-L-rhamnonate (KDR) to pyruvate and lactaldehyde. The protein is 2-keto-3-deoxy-L-rhamnonate aldolase of Salmonella enteritidis PT4 (strain P125109).